The primary structure comprises 883 residues: Alanine--tRNA ligase (883 aa).

Residues H560, H564, C665, and H669 each contribute to the Zn(2+) site.

The protein belongs to the class-II aminoacyl-tRNA synthetase family. Zn(2+) serves as cofactor.

It localises to the cytoplasm. It carries out the reaction tRNA(Ala) + L-alanine + ATP = L-alanyl-tRNA(Ala) + AMP + diphosphate. Its function is as follows. Catalyzes the attachment of alanine to tRNA(Ala) in a two-step reaction: alanine is first activated by ATP to form Ala-AMP and then transferred to the acceptor end of tRNA(Ala). Also edits incorrectly charged Ser-tRNA(Ala) and Gly-tRNA(Ala) via its editing domain. This is Alanine--tRNA ligase from Mesomycoplasma hyopneumoniae (strain J / ATCC 25934 / NCTC 10110) (Mycoplasma hyopneumoniae).